The sequence spans 306 residues: Aspartate carbamoyltransferase catalytic subunit (306 aa).

Positions 51 and 52 each coordinate carbamoyl phosphate. K79 is an L-aspartate binding site. Positions 101, 129, and 132 each coordinate carbamoyl phosphate. 2 residues coordinate L-aspartate: R162 and R213. Carbamoyl phosphate is bound by residues A254 and P255.

Belongs to the aspartate/ornithine carbamoyltransferase superfamily. ATCase family. As to quaternary structure, heterododecamer (2C3:3R2) of six catalytic PyrB chains organized as two trimers (C3), and six regulatory PyrI chains organized as three dimers (R2).

The catalysed reaction is carbamoyl phosphate + L-aspartate = N-carbamoyl-L-aspartate + phosphate + H(+). Its pathway is pyrimidine metabolism; UMP biosynthesis via de novo pathway; (S)-dihydroorotate from bicarbonate: step 2/3. In terms of biological role, catalyzes the condensation of carbamoyl phosphate and aspartate to form carbamoyl aspartate and inorganic phosphate, the committed step in the de novo pyrimidine nucleotide biosynthesis pathway. The protein is Aspartate carbamoyltransferase catalytic subunit of Bacillus thuringiensis (strain Al Hakam).